Reading from the N-terminus, the 170-residue chain is Small ribosomal subunit protein uS5 (170 aa).

The S5 DRBM domain maps to 16 to 79 (IEDQLVAINR…EAGKKNMISV (64 aa)).

This sequence belongs to the universal ribosomal protein uS5 family. In terms of assembly, part of the 30S ribosomal subunit. Contacts proteins S4 and S8.

Functionally, with S4 and S12 plays an important role in translational accuracy. In terms of biological role, located at the back of the 30S subunit body where it stabilizes the conformation of the head with respect to the body. The sequence is that of Small ribosomal subunit protein uS5 from Lactobacillus delbrueckii subsp. bulgaricus (strain ATCC 11842 / DSM 20081 / BCRC 10696 / JCM 1002 / NBRC 13953 / NCIMB 11778 / NCTC 12712 / WDCM 00102 / Lb 14).